Consider the following 377-residue polypeptide: DNA replication and repair protein RecF (377 aa).

G30–S37 lines the ATP pocket.

The protein belongs to the RecF family.

The protein localises to the cytoplasm. The RecF protein is involved in DNA metabolism; it is required for DNA replication and normal SOS inducibility. RecF binds preferentially to single-stranded, linear DNA. It also seems to bind ATP. This Cyanothece sp. (strain PCC 7425 / ATCC 29141) protein is DNA replication and repair protein RecF.